A 447-amino-acid polypeptide reads, in one-letter code: Keratin, type I cytoskeletal 15 (447 aa).

Positions 1 to 93 (MATTFLQTSS…GGDGGLLSGN (93 aa)) are head. Phosphoserine occurs at positions 16, 28, 33, and 47. The interval 94–129 (EKVTMQNLNDRLASYLDKVRALEEANTELEVKIRDW) is coil 1A. In terms of domain architecture, IF rod spans 94-406 (EKVTMQNLND…NLLEGQDAKM (313 aa)). Thr120 carries the phosphothreonine modification. A linker 1 region spans residues 130 to 148 (YQKQSPASPDRDYSHYFKT). The segment at 149–240 (MEEIRDKILA…KNHEEEMKEF (92 aa)) is coil 1B. Residues 241–260 (SSQLAGQVNVEMDAAPGVDL) are linker 12. The coil 2 stretch occupies residues 261–402 (TRMLAEMREQ…STYRNLLEGQ (142 aa)). Lys289 is covalently cross-linked (Glycyl lysine isopeptide (Lys-Gly) (interchain with G-Cter in SUMO2)). A phosphothreonine mark is found at Thr290 and Thr312. Positions 403-447 (DAKMAAIGVREASLRGGSSGGGSNFHISVEESVDGKVVSSRKRES) are tail. A Glycyl lysine isopeptide (Lys-Gly) (interchain with G-Cter in SUMO1); alternate cross-link involves residue Lys438. A Glycyl lysine isopeptide (Lys-Gly) (interchain with G-Cter in SUMO2); alternate cross-link involves residue Lys438.

It belongs to the intermediate filament family. In terms of assembly, heterotetramer of two type I and two type II keratins. Forms a heterodimer with KRT14. Interacts with NOD2.

In Rattus norvegicus (Rat), this protein is Keratin, type I cytoskeletal 15.